Reading from the N-terminus, the 318-residue chain is Methionyl-tRNA formyltransferase (318 aa).

Serine 110–proline 113 lines the (6S)-5,6,7,8-tetrahydrofolate pocket.

It belongs to the Fmt family.

The catalysed reaction is L-methionyl-tRNA(fMet) + (6R)-10-formyltetrahydrofolate = N-formyl-L-methionyl-tRNA(fMet) + (6S)-5,6,7,8-tetrahydrofolate + H(+). In terms of biological role, attaches a formyl group to the free amino group of methionyl-tRNA(fMet). The formyl group appears to play a dual role in the initiator identity of N-formylmethionyl-tRNA by promoting its recognition by IF2 and preventing the misappropriation of this tRNA by the elongation apparatus. This Lacticaseibacillus casei (strain BL23) (Lactobacillus casei) protein is Methionyl-tRNA formyltransferase.